We begin with the raw amino-acid sequence, 371 residues long: MPVFLSSRFLFFCIIVPLLISITLYQLDTFDPAHHPADSLISSTASIPPLINERFLTGAEFIGVGLLNSPEDIAYHEDSGFIYTGCVDGWVKRVKVAESVNDSLVEDLVNTGGRPLGIAFGIHGEVIVADAYKGLLNISGDGKKTELLTEEADGVRFKLPDAVTVADNGVLYFTDGSYKYNLHQFSFDILEGKPHGRLMSFDPTTKVTRVLLRDLYFANGVSLSPDQTHLVFCETPIRRCSKYYINGGRVELFIQGLPGYPDNIRYDGDGHYWIAMPSGVTTLWKLSMKYPFLRKITAMAAKYGYEPMFMENAGVLQVDLDGNPIAYYHDQALSHITTGVKIGNYLYCGSLWHSHILRLDLLKYPAQNKKL.

A signal peptide spans 1-21 (MPVFLSSRFLFFCIIVPLLIS). 2 N-linked (GlcNAc...) asparagine glycosylation sites follow: Asn-101 and Asn-137. At Tyr-303 the chain carries Phosphotyrosine.

The protein belongs to the strictosidine synthase family.

It is found in the vacuole. This chain is Protein STRICTOSIDINE SYNTHASE-LIKE 6, found in Arabidopsis thaliana (Mouse-ear cress).